The following is a 421-amino-acid chain: Granaticin polyketide putative beta-ketoacyl synthase 1 (421 aa).

Residues 2 to 416 (TRRVVITGVG…GFQSAMVLHR (415 aa)) form the Ketosynthase family 3 (KS3) domain. Residues Cys-169, His-309, and His-346 each act as for beta-ketoacyl synthase activity in the active site.

This sequence belongs to the thiolase-like superfamily. Beta-ketoacyl-ACP synthases family.

It functions in the pathway antibiotic biosynthesis; granaticin biosynthesis. In Streptomyces violaceoruber, this protein is Granaticin polyketide putative beta-ketoacyl synthase 1 (gra-orf1).